The chain runs to 599 residues: Flap endonuclease GEN-like 1 (599 aa).

An N-domain region spans residues 1-96 (MGVGGNFWDL…ISRFFRSSGI (96 aa)). The tract at residues 2 to 95 (GVGGNFWDLL…RISRFFRSSG (94 aa)) is XPG-N domain. Mg(2+) contacts are provided by Asp-31, Asp-75, Glu-140, Glu-142, Asp-161, Asp-163, and Asp-213. Residues 128 to 213 (ELLGIPVLKA…IAISLLVGND (86 aa)) form an XPG-I domain region. The interval 128 to 217 (ELLGIPVLKA…LLVGNDYDSG (90 aa)) is I-domain. The 5'-3' exonuclease domain stretch occupies residues 213-407 (DYDSGGVLGI…LLPMLSTIYL (195 aa)). Disordered stretches follow at residues 522–545 (RESK…MGVQ) and 559–599 (AAGQ…LLFG). Composition is skewed to polar residues over residues 563–572 (SIETGGSSKA) and 580–590 (ATSTSSSNLTK).

Belongs to the XPG/RAD2 endonuclease family. GEN subfamily. The cofactor is Mg(2+).

The protein localises to the nucleus. Functionally, endonuclease which cleaves flap structures at the junction between single-stranded DNA and double-stranded DNA with a specific cleavage site in the 5' overhang strand exactly one nucleotide 3' of the branch point. Structure- and sequence-specific nuclease that resolves holliday junctions (HJs) by symmetrically oriented incisions in two opposing strands near the junction point, thus leading to ligatable products; HJs are physical links between homologous DNA molecules that arise as central intermediary structures during homologous recombination and repair in meiotic and somatic cells. Structure-specific nuclease with 5'-flap endonuclease activity, preferentially cleaving static flaps 5' overhang strand exactly one nucleotide in the 3' direction of the branch point. Also able to cleave double-stranded flap strand 1 exactly at the branch point. This Arabidopsis thaliana (Mouse-ear cress) protein is Flap endonuclease GEN-like 1.